A 466-amino-acid chain; its full sequence is Argininosuccinate lyase (466 aa).

The protein belongs to the lyase 1 family. Argininosuccinate lyase subfamily.

Its subcellular location is the cytoplasm. The catalysed reaction is 2-(N(omega)-L-arginino)succinate = fumarate + L-arginine. It functions in the pathway amino-acid biosynthesis; L-arginine biosynthesis; L-arginine from L-ornithine and carbamoyl phosphate: step 3/3. The chain is Argininosuccinate lyase from Bartonella bacilliformis (strain ATCC 35685 / KC583 / Herrer 020/F12,63).